The chain runs to 214 residues: MTAVRAPRRRASSDEQGGFDFSRPDEIVCGVDEAGRGPLAGPVVAAAVILDPAQPIDGLDDSKALSAKKRDALYELIVARSLSYCVASASVDEIDTLNILHATMLAMKRAVEGLSVLPTLAQIDGNRCPTLTVRAEAIVSGDALVPSISAASILAKVTRDRMLVDLHERFPVYGFNVHAGYGTAKHLAALREHGPCEAHRRSFAPVRAALDLIR.

An RNase H type-2 domain is found at 26–214; sequence EIVCGVDEAG…PVRAALDLIR (189 aa). Residues aspartate 32, glutamate 33, and aspartate 124 each contribute to the a divalent metal cation site.

It belongs to the RNase HII family. It depends on Mn(2+) as a cofactor. Mg(2+) serves as cofactor.

Its subcellular location is the cytoplasm. The enzyme catalyses Endonucleolytic cleavage to 5'-phosphomonoester.. Functionally, endonuclease that specifically degrades the RNA of RNA-DNA hybrids. This Burkholderia lata (strain ATCC 17760 / DSM 23089 / LMG 22485 / NCIMB 9086 / R18194 / 383) protein is Ribonuclease HII.